The following is a 739-amino-acid chain: MYRLAVRDQCKCALQRTLQQTTANNRQFGGSSSGSGGREQGRRQQEEQGQQGDQGYQGYQSLPPHMREAGFGKVVLFVSPLAAVGGVITYAKYDDDFRKLVEKNVPGAGSVIKVALQEEPPFKGITKNVNDQIDKVKSGIETVTSTVDSVTSKVTGLFGGGSGDDKSKKSKVEPVKATPAEEKRPSKPSEVSKTEAKPVSKPAAAAAPAPAAKPKDNPLPRDVVELEKAIELSAQLAVKEYNVAIGVLKGFNDDVRKVVDKAVENGENSLWTTLKNRASARDTAVATAERAAREAQEKIVACEIALSAAATAQNAKKVEAVRDKIKKLVDHIGNVKDELYRHKDTASVSDKYWRNVEKARNYFIDEIESIFPGLSLADKKLNLSKEDLDLFILHAYTHVLAYQKELQRLQTDGELRLKRAIDSVRGDNDSEALRAQLEYHLEAERRKLAVENQKKIFHIHAESDKLLRLQLKKQAEAHADHIKDIVAQRETDLTRSFKRELEDKLATEKANYKLQLAGMLGKLRGMDAALAERADAERTANQAQALWAACQALWASVRAATPGVHYKDRLRPLKNEINAIAKVAKGDDLVAAVLESVPKEAQERGVYPEDALRERFLNVERVARRLALVPEEGAGLPIYFLSYLQSLFILRPDNPISKDELENKPFDYSKLDTYDILNRARYHVDRSDFLQALKYMNLLQGASRKIAGEWMKEARLMLETQQAANTLMAHAAASGLLYL.

A disordered region spans residues 23–63 (ANNRQFGGSSSGSGGREQGRRQQEEQGQQGDQGYQGYQSLP). A compositionally biased stretch (low complexity) spans 47–61 (EQGQQGDQGYQGYQS). The helical transmembrane segment at 69–89 (AGFGKVVLFVSPLAAVGGVIT) threads the bilayer. A disordered region spans residues 154-219 (VTGLFGGGSG…PAAKPKDNPL (66 aa)). Residues 163-198 (GDDKSKKSKVEPVKATPAEEKRPSKPSEVSKTEAKP) show a composition bias toward basic and acidic residues. Residues 199 to 212 (VSKPAAAAAPAPAA) show a composition bias toward low complexity. Residues 283-339 (TAVATAERAAREAQEKIVACEIALSAAATAQNAKKVEAVRDKIKKLVDHIGNVKDEL) adopt a coiled-coil conformation.

The protein belongs to the MICOS complex subunit Mic60 family. Component of the mitochondrial contact site and cristae organizing system (MICOS) complex. Interacts with the mitochondria-shaping protein Opa1.

Its subcellular location is the mitochondrion inner membrane. Functionally, component of the MICOS complex, a large protein complex of the mitochondrial inner membrane that plays crucial roles in the maintenance of crista junctions, inner membrane architecture, and formation of contact sites to the outer membrane. The chain is MICOS complex subunit Mic60 from Drosophila melanogaster (Fruit fly).